The chain runs to 308 residues: Elongation factor Ts (308 aa).

Residues 80 to 83 are involved in Mg(2+) ion dislocation from EF-Tu; that stretch reads TDFV.

The protein belongs to the EF-Ts family.

It is found in the cytoplasm. Its function is as follows. Associates with the EF-Tu.GDP complex and induces the exchange of GDP to GTP. It remains bound to the aminoacyl-tRNA.EF-Tu.GTP complex up to the GTP hydrolysis stage on the ribosome. The sequence is that of Elongation factor Ts from Sphingopyxis alaskensis (strain DSM 13593 / LMG 18877 / RB2256) (Sphingomonas alaskensis).